Consider the following 239-residue polypeptide: Probable transcriptional regulatory protein Sca_0317 (239 aa).

The protein belongs to the TACO1 family. YeeN subfamily.

It localises to the cytoplasm. This is Probable transcriptional regulatory protein Sca_0317 from Staphylococcus carnosus (strain TM300).